Consider the following 116-residue polypeptide: Movement protein TGB2 (116 aa).

Residues 1-11 (MPLTPPPNPQK) are Cytoplasmic-facing. Residues 12–32 (TYQIAILALGLVLLAFVLISD) traverse the membrane as a helical segment. The Lumenal portion of the chain corresponds to 33 to 77 (HSPKVGDHLHNLPFGGEYKDGTKSIKYFQRPNQHSLSKTLAKSHN). Residues 78 to 98 (TTIFLLILGLIVTLHGLHYFN) form a helical membrane-spanning segment. At 99-116 (NNRRVSSSLHCVLCQNKH) the chain is on the cytoplasmic side.

The protein belongs to the Tymovirales TGBp2 protein family.

The protein resides in the host endoplasmic reticulum membrane. Functionally, plays a role in viral cell-to-cell propagation, by facilitating genome transport to neighboring plant cells through plasmosdesmata,. The sequence is that of Movement protein TGB2 from White clover mosaic virus (strain M) (WCMV).